Here is a 324-residue protein sequence, read N- to C-terminus: Polyketide biosynthesis acyltransferase homolog PksD (324 aa).

Ser-99 is a catalytic residue.

The protein localises to the cytoplasm. Its pathway is antibiotic biosynthesis; bacillaene biosynthesis. In terms of biological role, probably involved in some intermediate steps for the synthesis of the antibiotic polyketide bacillaene which is involved in secondary metabolism. This is Polyketide biosynthesis acyltransferase homolog PksD (pksD) from Bacillus subtilis (strain 168).